The sequence spans 1396 residues: Sterol 3-beta-glucosyltransferase (1396 aa).

Residues 1–16 (MRPLLDEAKRRVDRRL) are compositionally biased toward basic and acidic residues. Disordered stretches follow at residues 1 to 59 (MRPL…TKEG), 82 to 193 (HARF…AAPV), and 206 to 233 (SKGS…TSAS). The span at 18-28 (ASRQSLSTSRI) shows a compositional bias: polar residues. Composition is skewed to basic and acidic residues over residues 35 to 44 (ERLKDDHDAQ) and 82 to 108 (HARF…KESQ). Over residues 156 to 175 (GSSQRQGGAQTEPSTGNQMS) the composition is skewed to polar residues. Positions 237-288 (LRLMEMFGFESPEKVLVEYACSLVQSMLLQGYMYVTEGHICFYAYLPRKSTV) constitute a GRAM 1 domain. Residues 289–387 (AIKSGYLYKR…WVKSLQKVIF (99 aa)) form the PH domain. Polar residues-rich tracts occupy residues 459–479 (QAKN…QSRA) and 487–497 (SLTSGLSQVLG). 2 disordered regions span residues 459–531 (QAKN…RDLS) and 576–635 (FRRQ…VQQS). Over residues 585–595 (QFGRRHSDETA) the composition is skewed to basic and acidic residues. One can recognise a GRAM 2 domain in the interval 719 to 785 (DRFRAHFALP…KDVENVEKEK (67 aa)). A disordered region spans residues 841–880 (EQDESEAAKAEHRMLQEARKDASGGLIPQTPSDESPEIHP). Residues 846–862 (EAAKAEHRMLQEARKDA) show a composition bias toward basic and acidic residues. 10 residues coordinate UDP-alpha-D-glucose: serine 907, arginine 908, aspartate 910, alanine 1210, histidine 1212, histidine 1225, glycine 1229, threonine 1230, aspartate 1249, and glutamine 1250.

Belongs to the glycosyltransferase 28 family.

It localises to the cytoplasm. The protein resides in the preautophagosomal structure membrane. It catalyses the reaction a sterol + UDP-alpha-D-glucose = a sterol 3-beta-D-glucoside + UDP + H(+). It carries out the reaction ergosterol + UDP-alpha-D-glucose = ergosteryl 3-beta-D-glucoside + UDP + H(+). In terms of biological role, sterol glycosyltransferase responsible for the glycosylation of ergosterol to form ergosterol-glucoside. The sequence is that of Sterol 3-beta-glucosyltransferase from Aspergillus terreus (strain NIH 2624 / FGSC A1156).